The following is a 185-amino-acid chain: Large ribosomal subunit protein uL22 (185 aa).

Belongs to the universal ribosomal protein uL22 family. In terms of assembly, part of the 50S ribosomal subunit.

In terms of biological role, this protein binds specifically to 23S rRNA. It makes multiple contacts with different domains of the 23S rRNA in the assembled 50S subunit and ribosome. Functionally, the globular domain of the protein is located near the polypeptide exit tunnel on the outside of the subunit, while an extended beta-hairpin is found that lines the wall of the exit tunnel in the center of the 70S ribosome. In Caldivirga maquilingensis (strain ATCC 700844 / DSM 13496 / JCM 10307 / IC-167), this protein is Large ribosomal subunit protein uL22.